The following is a 504-amino-acid chain: Maturase K (504 aa).

The protein belongs to the intron maturase 2 family. MatK subfamily.

The protein resides in the plastid. Its subcellular location is the chloroplast. Its function is as follows. Usually encoded in the trnK tRNA gene intron. Probably assists in splicing its own and other chloroplast group II introns. This is Maturase K from Arabidopsis halleri.